We begin with the raw amino-acid sequence, 367 residues long: Pantothenate kinase CAB1 (367 aa).

The protein belongs to the type II pantothenate kinase family.

Its subcellular location is the cytoplasm. The protein resides in the nucleus. It carries out the reaction (R)-pantothenate + ATP = (R)-4'-phosphopantothenate + ADP + H(+). It participates in cofactor biosynthesis; coenzyme A biosynthesis; CoA from (R)-pantothenate: step 1/5. Its activity is regulated as follows. Regulated by feedback inhibition by malonyl-CoA. Functionally, plays a role in the physiological regulation of the intracellular CoA concentration. This chain is Pantothenate kinase CAB1 (CAB1), found in Saccharomyces cerevisiae (strain ATCC 204508 / S288c) (Baker's yeast).